The sequence spans 71 residues: MRKAFYTWLMAQRNSTSNKPAALLADLVFEDTTFPKHTDDFETISRYLEEEASFSFNLGQFDQIWEDYLSH.

The protein belongs to the UPF0346 family.

The sequence is that of UPF0346 protein SZO_05010 from Streptococcus equi subsp. zooepidemicus (strain H70).